Reading from the N-terminus, the 498-residue chain is Pentatricopeptide repeat-containing protein At3g61360 (498 aa).

PPR repeat units follow at residues 102-132 (TSDS…VRKD), 138-172 (SFKS…IFRK), 175-205 (GVDE…LHSR), 209-243 (DVKT…GFKP), 244-278 (NSVT…DFDI), 279-313 (TVQI…GLTP), 314-348 (DCGA…GIEP), 349-385 (DSVT…SLVP), and 386-420 (KTPT…GYCP).

It belongs to the PPR family. P subfamily.

This Arabidopsis thaliana (Mouse-ear cress) protein is Pentatricopeptide repeat-containing protein At3g61360.